The following is a 586-amino-acid chain: uncharacterized protein (586 aa).

Disordered stretches follow at residues 17–64 and 80–123; these read VRRT…ETEE and HSCS…GGAN. Positions 28 to 37 are enriched in polar residues; it reads PSTSGSIAWT. Composition is skewed to low complexity over residues 38-52 and 80-91; these read SSES…VSSS and HSCSAATTSQQS. Basic and acidic residues predominate over residues 94–110; sequence QSKEHRIGGIKKEEKPI. Positions 112 to 123 are enriched in gly residues; it reads MGGGSSENGGAN. 12 helical membrane passes run 151-171, 191-211, 218-238, 243-263, 283-303, 317-337, 375-395, 413-433, 441-461, 466-486, 513-533, and 536-556; these read WVIL…WIQY, WTSM…AWLL, LSVL…LLST, FWVT…TLGI, LGVF…PLIV, TLFL…ICFF, FVIL…ISTL, YVGL…GFIL, LTTI…TLTI, MVLV…YLPI, IFGI…GTFT, and IIMS…REDL.

This sequence belongs to the major facilitator superfamily. Feline leukemia virus subgroup C receptor (TC 2.A.1.28.1) family.

The protein localises to the membrane. This is an uncharacterized protein from Caenorhabditis elegans.